A 206-amino-acid polypeptide reads, in one-letter code: Ribosomal RNA small subunit methyltransferase G (206 aa).

S-adenosyl-L-methionine contacts are provided by residues glycine 73, leucine 78, 124–125, and arginine 139; that span reads VE.

The protein belongs to the methyltransferase superfamily. RNA methyltransferase RsmG family.

Its subcellular location is the cytoplasm. The enzyme catalyses guanosine(527) in 16S rRNA + S-adenosyl-L-methionine = N(7)-methylguanosine(527) in 16S rRNA + S-adenosyl-L-homocysteine. In terms of biological role, specifically methylates the N7 position of guanine in position 527 of 16S rRNA. In Sodalis glossinidius (strain morsitans), this protein is Ribosomal RNA small subunit methyltransferase G.